Consider the following 313-residue polypeptide: Porphobilinogen deaminase (313 aa).

Position 242 is an S-(dipyrrolylmethanemethyl)cysteine (C242).

It belongs to the HMBS family. Monomer. Dipyrromethane is required as a cofactor.

The catalysed reaction is 4 porphobilinogen + H2O = hydroxymethylbilane + 4 NH4(+). It participates in porphyrin-containing compound metabolism; protoporphyrin-IX biosynthesis; coproporphyrinogen-III from 5-aminolevulinate: step 2/4. In terms of biological role, tetrapolymerization of the monopyrrole PBG into the hydroxymethylbilane pre-uroporphyrinogen in several discrete steps. This Escherichia coli (strain K12 / MC4100 / BW2952) protein is Porphobilinogen deaminase.